A 664-amino-acid chain; its full sequence is UvrABC system protein B (664 aa).

The Helicase ATP-binding domain maps to 24-182 (AGLRAGYRHQ…QLIDLQFERN (159 aa)). 37–44 (GATGTGKT) serves as a coordination point for ATP. The Beta-hairpin signature appears at 90–113 (YYDEYTPEAYVPSKDLYIEKEASI). The Helicase C-terminal domain maps to 427 to 593 (QIDDLLGEIR…GIAKGVRDLT (167 aa)). A UVR domain is found at 624–659 (LKLIKDLEKQMKQAAKALAFEKAAALRDQIVELRQA).

Belongs to the UvrB family. As to quaternary structure, forms a heterotetramer with UvrA during the search for lesions. Interacts with UvrC in an incision complex.

It localises to the cytoplasm. Functionally, the UvrABC repair system catalyzes the recognition and processing of DNA lesions. A damage recognition complex composed of 2 UvrA and 2 UvrB subunits scans DNA for abnormalities. Upon binding of the UvrA(2)B(2) complex to a putative damaged site, the DNA wraps around one UvrB monomer. DNA wrap is dependent on ATP binding by UvrB and probably causes local melting of the DNA helix, facilitating insertion of UvrB beta-hairpin between the DNA strands. Then UvrB probes one DNA strand for the presence of a lesion. If a lesion is found the UvrA subunits dissociate and the UvrB-DNA preincision complex is formed. This complex is subsequently bound by UvrC and the second UvrB is released. If no lesion is found, the DNA wraps around the other UvrB subunit that will check the other stand for damage. In Chloroflexus aggregans (strain MD-66 / DSM 9485), this protein is UvrABC system protein B.